The primary structure comprises 466 residues: Soluble pyridine nucleotide transhydrogenase (466 aa).

36 to 45 (ERYHNVGGGC) serves as a coordination point for FAD.

Belongs to the class-I pyridine nucleotide-disulfide oxidoreductase family. Requires FAD as cofactor.

The protein localises to the cytoplasm. It carries out the reaction NAD(+) + NADPH = NADH + NADP(+). Conversion of NADPH, generated by peripheral catabolic pathways, to NADH, which can enter the respiratory chain for energy generation. The protein is Soluble pyridine nucleotide transhydrogenase of Salmonella gallinarum (strain 287/91 / NCTC 13346).